Here is a 364-residue protein sequence, read N- to C-terminus: DNA replication and repair protein RecF (364 aa).

Residue 30-37 (GNNGMGKT) participates in ATP binding.

Belongs to the RecF family.

It localises to the cytoplasm. Functionally, the RecF protein is involved in DNA metabolism; it is required for DNA replication and normal SOS inducibility. RecF binds preferentially to single-stranded, linear DNA. It also seems to bind ATP. In Porphyromonas gingivalis (strain ATCC 33277 / DSM 20709 / CIP 103683 / JCM 12257 / NCTC 11834 / 2561), this protein is DNA replication and repair protein RecF.